Reading from the N-terminus, the 241-residue chain is Small ribosomal subunit protein uS3 (241 aa).

Residues 39–107 (IRTYLKKELY…PLSVNIKEEK (69 aa)) enclose the KH type-2 domain. Positions 214-241 (AEVKEEQQKEGARRPKRAPKRENSGKAE) are disordered. A compositionally biased stretch (basic and acidic residues) spans 215 to 226 (EVKEEQQKEGAR).

The protein belongs to the universal ribosomal protein uS3 family. Part of the 30S ribosomal subunit. Forms a tight complex with proteins S10 and S14.

Its function is as follows. Binds the lower part of the 30S subunit head. Binds mRNA in the 70S ribosome, positioning it for translation. The protein is Small ribosomal subunit protein uS3 of Sulfurimonas denitrificans (strain ATCC 33889 / DSM 1251) (Thiomicrospira denitrificans (strain ATCC 33889 / DSM 1251)).